Here is a 271-residue protein sequence, read N- to C-terminus: Tryptophan synthase alpha chain (271 aa).

Catalysis depends on proton acceptor residues Glu49 and Asp60.

Belongs to the TrpA family. In terms of assembly, tetramer of two alpha and two beta chains.

It catalyses the reaction (1S,2R)-1-C-(indol-3-yl)glycerol 3-phosphate + L-serine = D-glyceraldehyde 3-phosphate + L-tryptophan + H2O. It participates in amino-acid biosynthesis; L-tryptophan biosynthesis; L-tryptophan from chorismate: step 5/5. In terms of biological role, the alpha subunit is responsible for the aldol cleavage of indoleglycerol phosphate to indole and glyceraldehyde 3-phosphate. The chain is Tryptophan synthase alpha chain from Yersinia pestis bv. Antiqua (strain Angola).